The following is a 274-amino-acid chain: Cytochrome c oxidase subunit 3 (274 aa).

Over A2–S15 the chain is Cytoplasmic. Residues I16–M36 form a helical membrane-spanning segment. At K37 to G48 the chain is on the periplasmic side. A helical membrane pass occupies residues P49 to G77. The Cytoplasmic segment spans residues E78–H79. The helical transmembrane segment at T80–Y115 threads the bilayer. Over P116 to W139 the chain is Periplasmic. A helical transmembrane segment spans residues H140 to E166. The Cytoplasmic portion of the chain corresponds to G167–D168. A helical membrane pass occupies residues R169–A197. Topologically, residues A198 to D203 are periplasmic. The helical transmembrane segment at T204–K237 threads the bilayer. Residues G238–Q244 lie on the Cytoplasmic side of the membrane. A helical transmembrane segment spans residues H245–R274.

Belongs to the cytochrome c oxidase subunit 3 family.

It is found in the cell inner membrane. It carries out the reaction 4 Fe(II)-[cytochrome c] + O2 + 8 H(+)(in) = 4 Fe(III)-[cytochrome c] + 2 H2O + 4 H(+)(out). The chain is Cytochrome c oxidase subunit 3 (ctaE) from Paracoccus denitrificans.